A 609-amino-acid chain; its full sequence is Kelch domain-containing protein 10 homolog (609 aa).

Residues 103-146 (ASDLDEEEEEEDDDVDVDVDYGDTDSESEFEEMYSDEWTSSSDE) form a disordered region. Residues 104–137 (SDLDEEEEEEDDDVDVDVDYGDTDSESEFEEMYS) are compositionally biased toward acidic residues. 6 Kelch repeats span residues 214-277 (HLYS…IHNN), 279-334 (LISH…IHKH), 335-381 (FLYT…RYRH), 389-437 (HIFV…GNRG), 458-508 (EAFI…HSDN), and 510-554 (CMYV…YNDN). The tract at residues 576 to 609 (LPPQRRRRLDTSQPDPSMLISLYSNPKRARSSTQ) is disordered.

As to quaternary structure, interacts with Elongin-C; may be the substrate recognition component of an E3 ubiquitin ligase complex.

Activates the Pk92B/DASK1-MAPK signaling cascade. This Drosophila melanogaster (Fruit fly) protein is Kelch domain-containing protein 10 homolog (slim).